A 167-amino-acid polypeptide reads, in one-letter code: Lipoprotein signal peptidase (167 aa).

The next 3 membrane-spanning stretches (helical) occupy residues 10 to 30 (LIWL…KAWV), 68 to 88 (WQLW…AFWL), and 98 to 118 (SAVP…DRLM). Active-site residues include Asp124 and Asp142. The chain crosses the membrane as a helical span at residues 138–158 (FNIADSAIVGGAIGIALFGLF).

Belongs to the peptidase A8 family.

Its subcellular location is the cell inner membrane. It carries out the reaction Release of signal peptides from bacterial membrane prolipoproteins. Hydrolyzes -Xaa-Yaa-Zaa-|-(S,diacylglyceryl)Cys-, in which Xaa is hydrophobic (preferably Leu), and Yaa (Ala or Ser) and Zaa (Gly or Ala) have small, neutral side chains.. Its pathway is protein modification; lipoprotein biosynthesis (signal peptide cleavage). In terms of biological role, this protein specifically catalyzes the removal of signal peptides from prolipoproteins. This is Lipoprotein signal peptidase from Xanthomonas campestris pv. campestris (strain 8004).